The chain runs to 430 residues: Adenylosuccinate synthetase (430 aa).

Residues 13-19 (GDEGKGK) and 41-43 (GHT) contribute to the GTP site. D14 serves as the catalytic Proton acceptor. The Mg(2+) site is built by D14 and G41. Residues 14–17 (DEGK), 39–42 (NAGH), T130, R144, Q225, T240, and R304 each bind IMP. H42 serves as the catalytic Proton donor. A substrate-binding site is contributed by 300–306 (STTGRAR). GTP contacts are provided by residues R306, 332–334 (KLD), and 414–416 (STG).

Belongs to the adenylosuccinate synthetase family. In terms of assembly, homodimer. It depends on Mg(2+) as a cofactor.

The protein resides in the cytoplasm. The enzyme catalyses IMP + L-aspartate + GTP = N(6)-(1,2-dicarboxyethyl)-AMP + GDP + phosphate + 2 H(+). It functions in the pathway purine metabolism; AMP biosynthesis via de novo pathway; AMP from IMP: step 1/2. In terms of biological role, plays an important role in the de novo pathway of purine nucleotide biosynthesis. Catalyzes the first committed step in the biosynthesis of AMP from IMP. The chain is Adenylosuccinate synthetase from Pseudomonas entomophila (strain L48).